The following is a 715-amino-acid chain: Arginine kinase (715 aa).

2 Approximate repeats span residues 1–366 and 367–715; these read MADP…IAKK and RSVF…KSTK. The Phosphagen kinase N-terminal 1 domain maps to 11–95; the sequence is KSKNAFPDPL…FDAIIEDYHS (85 aa). 68–72 provides a ligand contact to substrate; that stretch reads GVGVY. A Phosphagen kinase C-terminal 1 domain is found at 123–362; that stretch reads YIRSTRIRVA…KALMELEKEA (240 aa). ATP is bound by residues 126 to 130 and histidine 189; that span reads STRIR. Glutamate 229 lines the substrate pocket. Arginine 233 contacts ATP. Cysteine 275 contacts substrate. ATP-binding positions include 284-288 and 312-317; these read RASVH and RGIHGE. Glutamate 317 is a substrate binding site. The Phosphagen kinase N-terminal 2 domain maps to 365 to 447; sequence KKRSVFPEVL…FDKIVEDYHS (83 aa). One can recognise a Phosphagen kinase C-terminal 2 domain in the interval 475–714; the sequence is YIRSTRIRVA…KKLLEIEKST (240 aa).

Belongs to the ATP:guanido phosphotransferase family. In terms of assembly, monomer.

It catalyses the reaction L-arginine + ATP = N(omega)-phospho-L-arginine + ADP + H(+). The sequence is that of Arginine kinase from Anthopleura japonica (Sea anemone).